Reading from the N-terminus, the 707-residue chain is Pheromone-processing carboxypeptidase KEX1 (707 aa).

An N-terminal signal peptide occupies residues 1 to 17; the sequence is MLLSVFIILINTLFVLA. The Lumenal portion of the chain corresponds to 18–564; sequence IPPKEGSDNN…EESTSSKFTR (547 aa). N-linked (GlcNAc...) asparagine glycosylation is found at Asn-64 and Asn-121. Ser-183 is an active-site residue. N-linked (GlcNAc...) asparagine glycans are attached at residues Asn-293 and Asn-378. Asp-393 is a catalytic residue. 2 N-linked (GlcNAc...) asparagine glycosylation sites follow: Asn-440 and Asn-448. The active site involves His-451. The tract at residues 496-557 is disordered; that stretch reads GQEIPADESS…ASFIPEPEES (62 aa). A compositionally biased stretch (basic and acidic residues) spans 503–533; that stretch reads ESSKPIEDKPDDKPIEDKPEETKPEQTKPED. The span at 536–549 shows a compositional bias: low complexity; the sequence is SSSTSEIIPTSEAS. Residues 565-585 form a helical membrane-spanning segment; the sequence is LIQLGVIFIIFWGVYILYVSY. Over 586-707 the chain is Cytoplasmic; the sequence is RARPSSIIKK…GNPKKTESKS (122 aa). Residues 644 to 707 are disordered; sequence NTSNRGRYAP…GNPKKTESKS (64 aa). Over residues 683-694 the composition is skewed to acidic residues; sequence SDDDEDDDEDVE. Basic and acidic residues predominate over residues 695-707; sequence THEGNPKKTESKS.

This sequence belongs to the peptidase S10 family.

It is found in the golgi apparatus. The protein localises to the trans-Golgi network membrane. It catalyses the reaction Preferential release of a C-terminal arginine or lysine residue.. Protease with a carboxypeptidase B-like function involved in the C-terminal processing of the lysine and arginine residues from protein precursors. Promotes cell fusion and is involved in the programmed cell death. In Candida tropicalis (strain ATCC MYA-3404 / T1) (Yeast), this protein is Pheromone-processing carboxypeptidase KEX1 (KEX1).